Reading from the N-terminus, the 178-residue chain is Cytochrome b6-f complex iron-sulfur subunit (178 aa).

The chain crosses the membrane as a helical span at residues 20–42 (LLTFGTATGVALGALYPVANYFM). Residues 65–161 (KTGWLASHQA…VDVDDDAVLV (97 aa)) enclose the Rieske domain. [2Fe-2S] cluster is bound by residues Cys-107, His-109, Cys-125, and His-128. A disulfide bridge links Cys-112 with Cys-127.

It belongs to the Rieske iron-sulfur protein family. As to quaternary structure, the 4 large subunits of the cytochrome b6-f complex are cytochrome b6, subunit IV (17 kDa polypeptide, PetD), cytochrome f and the Rieske protein, while the 4 small subunits are PetG, PetL, PetM and PetN. The complex functions as a dimer. [2Fe-2S] cluster is required as a cofactor.

The protein resides in the cellular thylakoid membrane. It carries out the reaction 2 oxidized [plastocyanin] + a plastoquinol + 2 H(+)(in) = 2 reduced [plastocyanin] + a plastoquinone + 4 H(+)(out). Component of the cytochrome b6-f complex, which mediates electron transfer between photosystem II (PSII) and photosystem I (PSI), cyclic electron flow around PSI, and state transitions. The polypeptide is Cytochrome b6-f complex iron-sulfur subunit (Prochlorococcus marinus subsp. pastoris (strain CCMP1986 / NIES-2087 / MED4)).